The following is a 219-amino-acid chain: Proteasome subunit beta type-9 (219 aa).

Positions M1 to G20 are cleaved as a propeptide — removed in mature form. Catalysis depends on T21, which acts as the Nucleophile. An N6-acetyllysine mark is found at K53 and K109.

Belongs to the peptidase T1B family. The 26S proteasome consists of a 20S proteasome core and two 19S regulatory subunits. The 20S proteasome core is composed of 28 subunits that are arranged in four stacked rings, resulting in a barrel-shaped structure. The two end rings are each formed by seven alpha subunits, and the two central rings are each formed by seven beta subunits. The catalytic chamber with the active sites is on the inside of the barrel. Component of the immunoproteasome, where it displaces the equivalent housekeeping subunit PSMB6. Component of the spermatoproteasome, a form of the proteasome specifically found in testis. Interacts with NCOA2 and NCOA3. Autocleaved. The resulting N-terminal Thr residue of the mature subunit is responsible for the nucleophile proteolytic activity. In terms of tissue distribution, detected in the cytoplasmic lobe of elongated spermatids, in residual bodies, and in the acrosomal cap of round spermatids.

The protein localises to the cytoplasm. The protein resides in the nucleus. The enzyme catalyses Cleavage of peptide bonds with very broad specificity.. In terms of biological role, the proteasome is a multicatalytic proteinase complex which is characterized by its ability to cleave peptides with Arg, Phe, Tyr, Leu, and Glu adjacent to the leaving group at neutral or slightly basic pH. The proteasome has an ATP-dependent proteolytic activity. This subunit is involved in antigen processing to generate class I binding peptides. The chain is Proteasome subunit beta type-9 (Psmb9) from Rattus norvegicus (Rat).